The chain runs to 226 residues: UPF0111 protein PH0637 (226 aa).

This sequence belongs to the UPF0111 family.

This chain is UPF0111 protein PH0637, found in Pyrococcus horikoshii (strain ATCC 700860 / DSM 12428 / JCM 9974 / NBRC 100139 / OT-3).